A 252-amino-acid polypeptide reads, in one-letter code: Type III pantothenate kinase (252 aa).

6 to 13 (DIGNTTTE) provides a ligand contact to ATP. Substrate contacts are provided by residues Tyr-100 and 107 to 110 (GADR). Asp-109 acts as the Proton acceptor in catalysis. Position 129 (Asp-129) interacts with K(+). Thr-132 lines the ATP pocket. Thr-184 provides a ligand contact to substrate.

The protein belongs to the type III pantothenate kinase family. Homodimer. It depends on NH4(+) as a cofactor. K(+) serves as cofactor.

The protein localises to the cytoplasm. The catalysed reaction is (R)-pantothenate + ATP = (R)-4'-phosphopantothenate + ADP + H(+). Its pathway is cofactor biosynthesis; coenzyme A biosynthesis; CoA from (R)-pantothenate: step 1/5. Functionally, catalyzes the phosphorylation of pantothenate (Pan), the first step in CoA biosynthesis. In Sulfurihydrogenibium sp. (strain YO3AOP1), this protein is Type III pantothenate kinase.